The following is a 196-amino-acid chain: Segregation and condensation protein B (196 aa).

Belongs to the ScpB family. As to quaternary structure, homodimer. Homodimerization may be required to stabilize the binding of ScpA to the Smc head domains. Component of a cohesin-like complex composed of ScpA, ScpB and the Smc homodimer, in which ScpA and ScpB bind to the head domain of Smc. The presence of the three proteins is required for the association of the complex with DNA.

Its subcellular location is the cytoplasm. Participates in chromosomal partition during cell division. May act via the formation of a condensin-like complex containing Smc and ScpA that pull DNA away from mid-cell into both cell halves. This Lactobacillus johnsonii (strain CNCM I-12250 / La1 / NCC 533) protein is Segregation and condensation protein B.